The chain runs to 206 residues: Ribonuclease HII (206 aa).

In terms of domain architecture, RNase H type-2 spans 14–206; it reads ALVCGIDEAG…FRLRQLGEKP (193 aa). Residues aspartate 20, glutamate 21, and aspartate 117 each coordinate a divalent metal cation.

This sequence belongs to the RNase HII family. Mn(2+) serves as cofactor. Mg(2+) is required as a cofactor.

The protein localises to the cytoplasm. The enzyme catalyses Endonucleolytic cleavage to 5'-phosphomonoester.. Its function is as follows. Endonuclease that specifically degrades the RNA of RNA-DNA hybrids. The polypeptide is Ribonuclease HII (Pelodictyon phaeoclathratiforme (strain DSM 5477 / BU-1)).